Consider the following 472-residue polypeptide: MSTREGSLWGGRFADGPSDALAALSKSTHFDWVLAPYDIVASRAHTVILYRAGLLSEEQRDGLLAGLDSLAEDVADGSFTPLVTDEDVHAALERGLIDRVGPDLGGRLRAGRSRNDQVATLFRMWLRDAVRRVAAGALDVVGALVAQAAAHPEAIMPGKTHLQSAQPVLLAHHLLAHAHPLLRDVDRIVDFDKRAAVSPYGSGALAGSSLGLDPDAIAAELGFASAADNSIDATASRDFAAEAAFVFAMIGVDLSRLAEDVILWSSTEFGYVKLHDAWSTGSSIMPQKKNPDIAELARGKSGRLIGNLAGLLATLKAQPLAYNRDLQEDKEPVFDAVAQLELVLPAMAGLVGSLTFDVQRMAALAPAGYTLATDIAEWLVRQGVPFRSAHEAAGAAVRAAEQRAVGLDELTDDELAAISPALTPQVREVLTIEGSVSSRDARGGTAPARVVEQIDTVAATAARLRERLGGPA.

The protein belongs to the lyase 1 family. Argininosuccinate lyase subfamily.

The protein localises to the cytoplasm. The enzyme catalyses 2-(N(omega)-L-arginino)succinate = fumarate + L-arginine. Its pathway is amino-acid biosynthesis; L-arginine biosynthesis; L-arginine from L-ornithine and carbamoyl phosphate: step 3/3. In Mycobacterium avium (strain 104), this protein is Argininosuccinate lyase.